A 214-amino-acid polypeptide reads, in one-letter code: Small ribosomal subunit protein uS3 (214 aa).

One can recognise a KH type-2 domain in the interval 39–107; sequence IRAYLLKKPA…EVWVAVEEVK (69 aa).

This sequence belongs to the universal ribosomal protein uS3 family. In terms of assembly, part of the 30S ribosomal subunit. Forms a tight complex with proteins S10 and S14.

Functionally, binds the lower part of the 30S subunit head. Binds mRNA in the 70S ribosome, positioning it for translation. The protein is Small ribosomal subunit protein uS3 of Protochlamydia amoebophila (strain UWE25).